Reading from the N-terminus, the 828-residue chain is Periplasmic nitrate reductase (828 aa).

A signal peptide (tat-type signal) is located at residues 1–31 (MKLSRRSFMKANAVAAAAAAAGLSVPGVARA). Residues 39 to 95 (IKWDKAPCRFCGTGCGVLVGTQQGRVVACQGDPDAPVNRGLNCIKGYFLPKIMYGKD) form the 4Fe-4S Mo/W bis-MGD-type domain. The [4Fe-4S] cluster site is built by Cys46, Cys49, Cys53, and Cys81. Residues Lys83, Gln150, Asn175, Cys179, 212 to 219 (WGANMAEM), 243 to 247 (STYQH), 262 to 264 (QSD), Met372, Gln376, Asn482, 508 to 509 (SD), Lys531, Asp558, and 718 to 727 (TGRVLEHWHT) contribute to the Mo-bis(molybdopterin guanine dinucleotide) site. Substrate is bound at residue Phe794. 2 residues coordinate Mo-bis(molybdopterin guanine dinucleotide): Asn802 and Lys819.

It belongs to the prokaryotic molybdopterin-containing oxidoreductase family. NasA/NapA/NarB subfamily. In terms of assembly, component of the periplasmic nitrate reductase NapAB complex composed of NapA and NapB. Requires [4Fe-4S] cluster as cofactor. It depends on Mo-bis(molybdopterin guanine dinucleotide) as a cofactor. In terms of processing, predicted to be exported by the Tat system. The position of the signal peptide cleavage has not been experimentally proven.

The protein localises to the periplasm. The enzyme catalyses 2 Fe(II)-[cytochrome] + nitrate + 2 H(+) = 2 Fe(III)-[cytochrome] + nitrite + H2O. In terms of biological role, catalytic subunit of the periplasmic nitrate reductase complex NapAB. Receives electrons from NapB and catalyzes the reduction of nitrate to nitrite. The chain is Periplasmic nitrate reductase from Escherichia coli O7:K1 (strain IAI39 / ExPEC).